Here is a 33-residue protein sequence, read N- to C-terminus: Mu-theraphotoxin-Os1a (33 aa).

3 disulfide bridges follow: cysteine 2/cysteine 17, cysteine 9/cysteine 22, and cysteine 16/cysteine 29. Leucine amide is present on leucine 33.

It belongs to the neurotoxin 10 (Hwtx-1) family. 14 (Hntx-1) subfamily. As to quaternary structure, monomer. Expressed by the venom gland.

Its subcellular location is the secreted. Potently and reversibly inhibits some human voltage-gated sodium channels (Nav1.1/SCN1A (IC(50)=72.0 nM), Nav1.2/SCN2A (IC(50)=75.5 nM), Nav1.6/SCN8A (IC(50)=115.0 nM), Nav1.7/SCN9A (IC(50)=52.7-129.5 nM), Nav1.3/SCN3A (IC(50)=306.6 nM)). The hNav1.7/SCN9A channel inhibition occurs without any change in steady-state inactivation- and conductance-voltage relationships. On adult mouse DRG neurons, this toxin is approximately 1000-fold more efficient to inhibit tetrodotoxin (TTX)-sensitive than TTX-resistant sodium currents. In vivo, this toxin exhibits analgesic effects in mice pain models. The sequence is that of Mu-theraphotoxin-Os1a from Omothymus schioedtei (Malaysian earth tiger tarantula).